Here is a 69-residue protein sequence, read N- to C-terminus: Conotoxin LvVID (69 aa).

The first 17 residues, 1–17, serve as a signal peptide directing secretion; the sequence is VLIIAVLFLTACQLTTA. Positions 18-40 are excised as a propeptide; that stretch reads ETYPRGQQRHHALRSTDKNSKLT. Cystine bridges form between Cys43/Cys57, Cys50/Cys61, and Cys56/Cys68.

The protein belongs to the conotoxin O1 superfamily. As to expression, expressed by the venom duct.

Its subcellular location is the secreted. In Conus lividus (Livid cone), this protein is Conotoxin LvVID.